An 802-amino-acid polypeptide reads, in one-letter code: Copper-exporting P-type ATPase (802 aa).

HMA domains follow at residues 5–71 and 73–139; these read KEIA…YHVV and EKAE…YKLK. Cu(+) contacts are provided by Cys-16, Cys-19, Cys-84, and Cys-87. 6 helical membrane passes run 162 to 181, 196 to 218, 230 to 249, 259 to 278, 412 to 434, and 447 to 469; these read LIFSAVLSFPLLWAMVSHFT, WMQFALATPVQFLIGWPFYVGAY, VLVALGTTAAYAYSLYLTFQ, GLYYETSAILLTLILLGKLF, ISGIFVPIVLGIAVLTFLIWYLW, and FIAVLVIACPCALGLATPTSIMA. Asp-499 (4-aspartylphosphate intermediate) is an active-site residue. Positions 698 and 702 each coordinate Mg(2+). 2 helical membrane passes run 756-775 and 779-796; these read LFWALGYNSLGIPIAALGFL and IAGAAMAFSSVSVVLNAL.

Belongs to the cation transport ATPase (P-type) (TC 3.A.3) family. Type IB subfamily. As to quaternary structure, monomer at sub-stoichiometric copper concentrations. Homodimer at higher copper concentrations. Forms a heterodimer (electrostatic interactions) with CopZ during the transfer of Cu(+).

It is found in the cell membrane. The enzyme catalyses Cu(+)(in) + ATP + H2O = Cu(+)(out) + ADP + phosphate + H(+). Functionally, involved in copper export. This chain is Copper-exporting P-type ATPase (copA), found in Bacillus subtilis (strain 168).